The primary structure comprises 926 residues: UvrABC system protein A (926 aa).

31–38 (GPSGSGKS) contacts ATP. The segment at 251–278 (CPEHGFSIPELSARLFSFNSPYGACPSC) adopts a C4-type zinc-finger fold. ABC transporter domains follow at residues 308–568 (SGYF…PSSL) and 588–916 (PSGK…KYLR). ATP is bound at residue 620-627 (GVSGSGKS). The C4-type zinc finger occupies 719-745 (CEACQGEGVIKVEMHFLPPVYVTCEVC).

It belongs to the ABC transporter superfamily. UvrA family. In terms of assembly, forms a heterotetramer with UvrB during the search for lesions.

Its subcellular location is the cytoplasm. Its function is as follows. The UvrABC repair system catalyzes the recognition and processing of DNA lesions. UvrA is an ATPase and a DNA-binding protein. A damage recognition complex composed of 2 UvrA and 2 UvrB subunits scans DNA for abnormalities. When the presence of a lesion has been verified by UvrB, the UvrA molecules dissociate. This chain is UvrABC system protein A, found in Aquifex aeolicus (strain VF5).